The following is a 71-amino-acid chain: UPF0337 protein PPA1427 (71 aa).

Positions 20 to 46 (EKIGGLTDDSDLKSAGADQKASGKVAQ) are disordered.

It belongs to the UPF0337 (CsbD) family.

The polypeptide is UPF0337 protein PPA1427 (Cutibacterium acnes (strain DSM 16379 / KPA171202) (Propionibacterium acnes)).